A 273-amino-acid chain; its full sequence is HUWE1-associated protein modifying stress responses 2 (273 aa).

Disordered regions lie at residues 146 to 181 (GKVP…SSSV), 204 to 230 (ISMR…FLED), and 251 to 273 (KRTS…NRMV). Over residues 149-165 (PPAPPPPRTPRTPPKPP) the composition is skewed to pro residues. Composition is skewed to polar residues over residues 170 to 181 (SQAVATESSSSV), 208 to 218 (SGDSPQDSGVA), and 254 to 267 (SAQC…SPIQ). The nuclear localization signal stretch occupies residues 249–273 (IRKRTSAQCSDGITDSPIQKRNRMV).

This sequence belongs to the HAPSTR1 family. Homooligomer. Heterooligomer with HAPSTR1; the interaction is direct and stabilizes HAPSTR1 independently of HUWE1. Interacts with HUWE1. In terms of tissue distribution, expressed in a tissue-restricted manner compared to HAPSTR1.

The protein resides in the nucleus. Together with HAPSTR1 plays a central regulatory role in the cellular response to molecular stressors, such as DNA damage, nutrient scarcity, and protein misfolding. Regulates these multiple stress response signaling pathways by stabilizing HAPSTR1, but also independently of HAPSTR1. The sequence is that of HUWE1-associated protein modifying stress responses 2 from Homo sapiens (Human).